Reading from the N-terminus, the 891-residue chain is Protein translocase subunit SecA 1 (891 aa).

Residues Gln-85, 103–107 (GEGKT), and Asp-491 contribute to the ATP site. Cys-877, Cys-879, Cys-888, and Cys-889 together coordinate Zn(2+).

It belongs to the SecA family. In terms of assembly, monomer and homodimer. Part of the essential Sec protein translocation apparatus which comprises SecA, SecYEG and auxiliary proteins SecDF. Other proteins may also be involved. Zn(2+) is required as a cofactor.

The protein resides in the cell membrane. It localises to the cytoplasm. The enzyme catalyses ATP + H2O + cellular proteinSide 1 = ADP + phosphate + cellular proteinSide 2.. Part of the Sec protein translocase complex. Interacts with the SecYEG preprotein conducting channel. Has a central role in coupling the hydrolysis of ATP to the transfer of proteins into and across the cell membrane, serving as an ATP-driven molecular motor driving the stepwise translocation of polypeptide chains across the membrane. The chain is Protein translocase subunit SecA 1 from Clostridioides difficile (strain 630) (Peptoclostridium difficile).